Reading from the N-terminus, the 155-residue chain is MRHLPYFCRGQVVRGFGRGSKQLGIPTANFPEQVVDNLPADISTGIYYGWASVGSGDVHKMVVSIGWNPYYKNTKKSMETHIMHTFKEDFYGEILNVAIVGYLRPEKNFDSLESLISAIQGDIEEAKKRLELPEHLKIKEDNFFQVSKSKIMNGH.

Positions 15, 21, 27, and 29 each coordinate ATP. Mg(2+)-binding residues include Thr27 and Asn29. The active-site Nucleophile is the Glu79. Residues Ile82, His84, and Tyr91 each contribute to the ATP site. Residues Arg104, Lys107, and Phe109 each contribute to the FMN site.

In terms of assembly, monomer. Directly interacts with TNFRSF1A death domain. TNFRSF1A-binding may be supported by TRADD. In the absence of TNFRSF1A, interacts with TRADD. Independently of TNFRSF1A, interacts with the NADPH oxidase subunit CYBA. Requires Zn(2+) as cofactor. The cofactor is Mg(2+). As to expression, detected in brain, placenta and urinary bladder.

The protein localises to the cytoplasm. It catalyses the reaction riboflavin + ATP = FMN + ADP + H(+). The protein operates within cofactor biosynthesis; FMN biosynthesis; FMN from riboflavin (ATP route): step 1/1. In terms of biological role, catalyzes the phosphorylation of riboflavin (vitamin B2) to form flavin-mononucleotide (FMN), hence rate-limiting enzyme in the synthesis of FAD. Essential for TNF-induced reactive oxygen species (ROS) production. Through its interaction with both TNFRSF1A and CYBA, physically and functionally couples TNFRSF1A to NADPH oxidase. TNF-activation of RFK may enhance the incorporation of FAD in NADPH oxidase, a critical step for the assembly and activation of NADPH oxidase. The protein is Riboflavin kinase (RFK) of Homo sapiens (Human).